The primary structure comprises 150 residues: Arginine repressor (150 aa).

Belongs to the ArgR family.

Its subcellular location is the cytoplasm. It participates in amino-acid biosynthesis; L-arginine biosynthesis [regulation]. Its function is as follows. Regulates arginine biosynthesis genes. In Carboxydothermus hydrogenoformans (strain ATCC BAA-161 / DSM 6008 / Z-2901), this protein is Arginine repressor.